A 140-amino-acid polypeptide reads, in one-letter code: uncharacterized protein (140 aa).

This is an uncharacterized protein from Escherichia coli O157:H7.